A 557-amino-acid polypeptide reads, in one-letter code: Formate--tetrahydrofolate ligase (557 aa).

An ATP-binding site is contributed by 66 to 73 (TPAGEGKS).

Belongs to the formate--tetrahydrofolate ligase family.

The catalysed reaction is (6S)-5,6,7,8-tetrahydrofolate + formate + ATP = (6R)-10-formyltetrahydrofolate + ADP + phosphate. The protein operates within one-carbon metabolism; tetrahydrofolate interconversion. The protein is Formate--tetrahydrofolate ligase of Clostridium botulinum (strain Kyoto / Type A2).